The following is a 1021-amino-acid chain: Putative 115 kDa protein in type-1 retrotransposable element R1DM (1021 aa).

Positions 479–741 constitute a Reverse transcriptase domain; that stretch reads RCIRLGYFPA…RSCRYLGITV (263 aa). The tract at residues 955 to 971 is gag-like cysteine motif; sequence CACGDPYEDWMHILCAC.

This is Putative 115 kDa protein in type-1 retrotransposable element R1DM (R1A1-element\ORF2) from Drosophila melanogaster (Fruit fly).